An 87-amino-acid chain; its full sequence is Kappa 1b-bungarotoxin (87 aa).

The signal sequence occupies residues 1 to 21 (MKTLLLTLVVVTIVCLDLGYT). Disulfide bonds link Cys24–Cys42, Cys35–Cys63, Cys48–Cys52, Cys67–Cys79, and Cys80–Cys85.

The protein belongs to the three-finger toxin family. Long-chain subfamily. Kappa-neurotoxin sub-subfamily. Homo- and heterodimer; non-covalently linked. As to expression, expressed by the venom gland.

Its subcellular location is the secreted. Postsynaptic neurotoxin that binds and inhibits neuronal nicotinic acetylcholine receptors (nAChR) with high affinity (IC(50)&lt;100 nM). Is a selective, and slowly reversible antagonist of alpha-3/CHRNA3-containing and some alpha-4/CHRNA4-containing AChRs. This Bungarus candidus (Malayan krait) protein is Kappa 1b-bungarotoxin.